A 283-amino-acid polypeptide reads, in one-letter code: Polyamine aminopropyltransferase (283 aa).

One can recognise a PABS domain in the interval 2–237 (ELWYTDQHTK…GHWLFGFASK (236 aa)). Residue Q31 coordinates S-methyl-5'-thioadenosine. Positions 62 and 86 each coordinate spermidine. S-methyl-5'-thioadenosine is bound by residues E106 and 137–138 (EG). Catalysis depends on D155, which acts as the Proton acceptor. Residue 155 to 158 (DCAD) coordinates spermidine. Position 162 (P162) interacts with S-methyl-5'-thioadenosine.

The protein belongs to the spermidine/spermine synthase family. In terms of assembly, homodimer or homotetramer.

Its subcellular location is the cytoplasm. The enzyme catalyses S-adenosyl 3-(methylsulfanyl)propylamine + putrescine = S-methyl-5'-thioadenosine + spermidine + H(+). It functions in the pathway amine and polyamine biosynthesis; spermidine biosynthesis; spermidine from putrescine: step 1/1. Functionally, catalyzes the irreversible transfer of a propylamine group from the amino donor S-adenosylmethioninamine (decarboxy-AdoMet) to putrescine (1,4-diaminobutane) to yield spermidine. This Lachnoclostridium phytofermentans (strain ATCC 700394 / DSM 18823 / ISDg) (Clostridium phytofermentans) protein is Polyamine aminopropyltransferase.